Here is a 152-residue protein sequence, read N- to C-terminus: Deoxyuridine 5'-triphosphate nucleotidohydrolase (152 aa).

Residues 71–73 (RSG), N84, 88–90 (LID), and M98 each bind substrate.

The protein belongs to the dUTPase family. The cofactor is Mg(2+).

It carries out the reaction dUTP + H2O = dUMP + diphosphate + H(+). The protein operates within pyrimidine metabolism; dUMP biosynthesis; dUMP from dCTP (dUTP route): step 2/2. In terms of biological role, this enzyme is involved in nucleotide metabolism: it produces dUMP, the immediate precursor of thymidine nucleotides and it decreases the intracellular concentration of dUTP so that uracil cannot be incorporated into DNA. The polypeptide is Deoxyuridine 5'-triphosphate nucleotidohydrolase (Aeromonas hydrophila subsp. hydrophila (strain ATCC 7966 / DSM 30187 / BCRC 13018 / CCUG 14551 / JCM 1027 / KCTC 2358 / NCIMB 9240 / NCTC 8049)).